The following is a 487-amino-acid chain: UDP-N-acetylmuramoyl-L-alanyl-D-glutamate--2,6-diaminopimelate ligase (487 aa).

The UDP-N-acetyl-alpha-D-muramoyl-L-alanyl-D-glutamate site is built by leucine 23 and serine 25. An ATP-binding site is contributed by 108-114 (GTNGKTS). UDP-N-acetyl-alpha-D-muramoyl-L-alanyl-D-glutamate contacts are provided by residues 150–151 (TT), serine 177, glutamine 183, and arginine 185. Lysine 217 carries the N6-carboxylysine modification. Meso-2,6-diaminopimelate is bound by residues arginine 378, 402–405 (DNPR), glycine 453, and glutamate 457. Positions 402–405 (DNPR) match the Meso-diaminopimelate recognition motif motif.

This sequence belongs to the MurCDEF family. MurE subfamily. It depends on Mg(2+) as a cofactor. Carboxylation is probably crucial for Mg(2+) binding and, consequently, for the gamma-phosphate positioning of ATP.

It localises to the cytoplasm. It catalyses the reaction UDP-N-acetyl-alpha-D-muramoyl-L-alanyl-D-glutamate + meso-2,6-diaminopimelate + ATP = UDP-N-acetyl-alpha-D-muramoyl-L-alanyl-gamma-D-glutamyl-meso-2,6-diaminopimelate + ADP + phosphate + H(+). The protein operates within cell wall biogenesis; peptidoglycan biosynthesis. Functionally, catalyzes the addition of meso-diaminopimelic acid to the nucleotide precursor UDP-N-acetylmuramoyl-L-alanyl-D-glutamate (UMAG) in the biosynthesis of bacterial cell-wall peptidoglycan. This is UDP-N-acetylmuramoyl-L-alanyl-D-glutamate--2,6-diaminopimelate ligase from Pseudomonas aeruginosa (strain ATCC 15692 / DSM 22644 / CIP 104116 / JCM 14847 / LMG 12228 / 1C / PRS 101 / PAO1).